A 449-amino-acid chain; its full sequence is POU domain, class 3, transcription factor 1 (449 aa).

5 disordered regions span residues 1–22 (MATTAQYLPRGPGGGAGGTGPL), 76–108 (GGGGGDWAGGPHLEHGKAGGGGTGRADDGGGGG), 132–152 (AHHLGPAMSPSPGAGGGHQPQ), 184–251 (GLHH…PSSD), and 393–449 (KRMT…GSVQ). Gly residues-rich tracts occupy residues 11 to 20 (GPGGGAGGTG) and 93 to 108 (AGGGGTGRADDGGGGG). Residues 132 to 143 (AHHLGPAMSPSP) show a composition bias toward low complexity. Residues 188 to 197 (ALHEDGHEAQ) show a composition bias toward basic and acidic residues. Low complexity predominate over residues 218-230 (AGGLHAAAAHLHP). The POU-specific domain maps to 245–319 (EDAPSSDDLE…LLNKWLEETD (75 aa)). The segment at residues 337-396 (KRKKRTSIEVGVKGALESHFLKCPKPSAHEITGLADSLQLEKEVVRVWFCNRRQKEKRMT) is a DNA-binding region (homeobox). Residues 425–434 (PSAPPPPPPA) are compositionally biased toward pro residues.

It belongs to the POU transcription factor family. Class-3 subfamily.

Its subcellular location is the nucleus. In terms of biological role, transcription factor that binds to the octamer motif (5'-ATTTGCAT-3'). Acts as a transcriptional activator when binding cooperatively with SOX4, SOX11, or SOX12 to gene promoters. Acts as a transcriptional repressor of myelin-specific genes. This chain is POU domain, class 3, transcription factor 1 (Pou3f1), found in Mus musculus (Mouse).